Consider the following 347-residue polypeptide: Ornithine carbamoyltransferase (347 aa).

Carbamoyl phosphate-binding positions include 56 to 59 (STRT), Gln83, Arg107, and 134 to 137 (HPTQ). Residues Asn168, Asp232, and 236–237 (SM) each bind L-ornithine. Carbamoyl phosphate is bound by residues 274-275 (CL) and Arg320.

It belongs to the aspartate/ornithine carbamoyltransferase superfamily. OTCase family.

The protein resides in the cytoplasm. The catalysed reaction is carbamoyl phosphate + L-ornithine = L-citrulline + phosphate + H(+). Reversibly catalyzes the transfer of the carbamoyl group from carbamoyl phosphate (CP) to the N(epsilon) atom of ornithine (ORN) to produce L-citrulline. This Blochmanniella floridana protein is Ornithine carbamoyltransferase.